The chain runs to 1210 residues: A disintegrin and metalloproteinase with thrombospondin motifs 19 (1210 aa).

The signal sequence occupies residues 1–30 (MGPEMRLTRICCCCCLLYQLGFLSHGTTSG). The propeptide occupies 31–319 (LQLTPDLEEW…KIADNRREKR (289 aa)). An N-linked (GlcNAc...) asparagine glycan is attached at N54. Positions 55-166 (ATGLSGGSSD…PAQQEEPSAE (112 aa)) are disordered. Gly residues predominate over residues 69–78 (RSSGGGGRGQ). Over residues 84–98 (REVRSVARAPQEEAT) the composition is skewed to basic and acidic residues. Residues 113 to 122 (GAEDEEELES) are compositionally biased toward acidic residues. Residues 130–139 (SGDTALSSGT) are compositionally biased toward polar residues. The span at 143–158 (WQPPLPPQRPSSPPPA) shows a compositional bias: pro residues. N-linked (GlcNAc...) asparagine glycosylation occurs at N263. Positions 295-302 (HHCGVISD) match the Cysteine switch motif. A Zn(2+)-binding site is contributed by C297. Positions 328–548 (YNIETVVVAD…KASSCLLHTD (221 aa)) constitute a Peptidase M12B domain. 11 disulfides stabilise this stretch: C404–C469, C444–C451, C463–C543, C502–C527, C572–C596, C583–C604, C591–C623, C617–C628, C648–C683, C652–C688, and C663–C673. Zn(2+) is bound at residue H485. The active site involves E486. 2 residues coordinate Zn(2+): H489 and H495. Positions 549–636 (PQSLSSVLVP…ECTRRTPAPE (88 aa)) constitute a Disintegrin domain. In terms of domain architecture, TSP type-1 1 spans 637 to 689 (HLAGEWSPWSSCSRSCSSGVSSRERKCPGLGSEARDCNGPRKQYRICENPPCP). Positions 794–917 (VIKGDFNHTR…PDNQSSKEPG (124 aa)) are spacer. N-linked (GlcNAc...) asparagine glycosylation is found at N800, N910, N931, N952, and N1012. TSP type-1 domains lie at 918–978 (PLFM…NEQP), 979–1040 (CQTR…QDCM), 1042–1086 (VWEA…EDCE), and 1090–1147 (KCYV…QPCN). 3 cysteine pairs are disulfide-bonded: C991–C1034, C995–C1039, and C1006–C1023. Positions 1163-1202 (LTFKCLGDQWPVYCRVIREKNLCQDMRWYQRCCETCRDFY) constitute a PLAC domain.

Requires Zn(2+) as cofactor. Post-translationally, the precursor is cleaved by a furin endopeptidase. Glycosylated. Can be O-fucosylated by POFUT2 on a serine or a threonine residue found within the consensus sequence C1-X(2)-(S/T)-C2-G of the TSP type-1 repeat domains where C1 and C2 are the first and second cysteine residue of the repeat, respectively. Fucosylated repeats can then be further glycosylated by the addition of a beta-1,3-glucose residue by the glucosyltransferase, B3GALTL. Fucosylation mediates the efficient secretion of ADAMTS family members. Can also be C-glycosylated with one or two mannose molecules on tryptophan residues within the consensus sequence W-X-X-W of the TPRs, and N-glycosylated. These other glycosylations can also facilitate secretion. Expressed predominantly in fetal ovary, low levels of expression is also detected in kidney, heart, skeletal muscle, lung and testis.

It localises to the secreted. Its subcellular location is the extracellular space. The protein localises to the extracellular matrix. The polypeptide is A disintegrin and metalloproteinase with thrombospondin motifs 19 (Adamts19) (Mus musculus (Mouse)).